The following is a 219-amino-acid chain: tRNA (guanine-N(7)-)-methyltransferase (219 aa).

Positions 44, 69, 102, and 125 each coordinate S-adenosyl-L-methionine. Substrate-binding residues include K129 and D161.

It belongs to the class I-like SAM-binding methyltransferase superfamily. TrmB family.

It catalyses the reaction guanosine(46) in tRNA + S-adenosyl-L-methionine = N(7)-methylguanosine(46) in tRNA + S-adenosyl-L-homocysteine. Its pathway is tRNA modification; N(7)-methylguanine-tRNA biosynthesis. Functionally, catalyzes the formation of N(7)-methylguanine at position 46 (m7G46) in tRNA. The polypeptide is tRNA (guanine-N(7)-)-methyltransferase (Clostridium perfringens (strain SM101 / Type A)).